The sequence spans 128 residues: Protein C10 (128 aa).

The protein belongs to the UPF0456 family.

It localises to the cytoplasm. This chain is Protein C10, found in Xenopus laevis (African clawed frog).